We begin with the raw amino-acid sequence, 146 residues long: Anti-sigma F factor (146 aa).

The protein belongs to the anti-sigma-factor family.

It catalyses the reaction L-seryl-[protein] + ATP = O-phospho-L-seryl-[protein] + ADP + H(+). The catalysed reaction is L-threonyl-[protein] + ATP = O-phospho-L-threonyl-[protein] + ADP + H(+). Its function is as follows. Binds to sigma F and blocks its ability to form an RNA polymerase holoenzyme (E-sigma F). Phosphorylates SpoIIAA on a serine residue. This phosphorylation may enable SpoIIAA to act as an anti-anti-sigma factor that counteracts SpoIIAB and thus releases sigma F from inhibition. This Bacillus licheniformis (strain ATCC 14580 / DSM 13 / JCM 2505 / CCUG 7422 / NBRC 12200 / NCIMB 9375 / NCTC 10341 / NRRL NRS-1264 / Gibson 46) protein is Anti-sigma F factor.